The chain runs to 222 residues: Cytidylate kinase (222 aa).

7-15 (GPSASGKST) is an ATP binding site.

This sequence belongs to the cytidylate kinase family. Type 1 subfamily.

The protein localises to the cytoplasm. The catalysed reaction is CMP + ATP = CDP + ADP. It catalyses the reaction dCMP + ATP = dCDP + ADP. In Aquifex aeolicus (strain VF5), this protein is Cytidylate kinase.